A 203-amino-acid chain; its full sequence is Guanylate kinase (203 aa).

The Guanylate kinase-like domain occupies 3-181; that stretch reads GTLYIVSAPS…ALDDLKAIFR (179 aa). ATP is bound at residue 10–17; sequence APSGAGKT.

It belongs to the guanylate kinase family.

It is found in the cytoplasm. It carries out the reaction GMP + ATP = GDP + ADP. Functionally, essential for recycling GMP and indirectly, cGMP. This chain is Guanylate kinase (gmk), found in Pseudomonas aeruginosa (strain ATCC 15692 / DSM 22644 / CIP 104116 / JCM 14847 / LMG 12228 / 1C / PRS 101 / PAO1).